The sequence spans 176 residues: Tubulin polymerization-promoting protein family member 3 (176 aa).

Alanine 2 is modified (N-acetylalanine).

Belongs to the TPPP family.

Its subcellular location is the cytoplasm. The protein resides in the cytoskeleton. Its function is as follows. Regulator of microtubule dynamic that has microtubule bundling activity. Required for embryo implantation; possibly by regulating beta-catenin. Also required for decidualization via regulation of beta-catenin. This Bos taurus (Bovine) protein is Tubulin polymerization-promoting protein family member 3 (TPPP3).